The sequence spans 1526 residues: DNA topoisomerase 2-alpha (1526 aa).

Met-1 is modified (N-acetylmethionine). Residues 1 to 21 (MELSPLQPVNENMQMNKKKNE) are disordered. Ser-4 carries the post-translational modification Phosphoserine. Lys-17 participates in a covalent cross-link: Glycyl lysine isopeptide (Lys-Gly) (interchain with G-Cter in SUMO2). ATP contacts are provided by residues Asn-90, Asn-119, and 147–149 (SSN). Glycyl lysine isopeptide (Lys-Gly) (interchain with G-Cter in SUMO2) cross-links involve residues Lys-155 and Lys-156. 160 to 167 (GRNGYGAK) provides a ligand contact to ATP. A Glycyl lysine isopeptide (Lys-Gly) (interchain with G-Cter in SUMO2) cross-link involves residue Lys-260. Position 281 is a phosphothreonine (Thr-281). The interaction with DNA stretch occupies residues 341–343 (KKK). Lys-351 participates in a covalent cross-link: Glycyl lysine isopeptide (Lys-Gly) (interchain with G-Cter in SUMO2). 375–377 (QTK) provides a ligand contact to ATP. Glycyl lysine isopeptide (Lys-Gly) (interchain with G-Cter in SUMO2) cross-links involve residues Lys-385, Lys-396, Lys-415, Lys-417, Lys-424, and Lys-439. Positions 454-571 (CTLILTEGDS…SLLRHRFLEE (118 aa)) constitute a Toprim domain. Position 460 (Glu-460) interacts with Mg(2+). Residues Lys-465, Lys-479, and Lys-528 each participate in a glycyl lysine isopeptide (Lys-Gly) (interchain with G-Cter in SUMO2) cross-link. Asp-540 and Asp-542 together coordinate Mg(2+). Glycyl lysine isopeptide (Lys-Gly) (interchain with G-Cter in SUMO2) cross-links involve residues Lys-583, Lys-598, Lys-613, Lys-621, Lys-624, Lys-631, Lys-638, Lys-654, Lys-661, and Lys-675. Positions 714–1166 (IPSMVDGLKP…SPSDLWKEDL (453 aa)) constitute a Topo IIA-type catalytic domain. The active-site O-(5'-phospho-DNA)-tyrosine intermediate is the Tyr-804. The tract at residues 989 to 998 (KLQTSLTCNS) is interaction with DNA. Residue Lys-1074 forms a Glycyl lysine isopeptide (Lys-Gly) (interchain with G-Cter in SUMO2) linkage. 2 disordered regions span residues 1089 to 1117 (WKEA…AESG) and 1180 to 1217 (EKQD…VIPQ). Over residues 1098–1109 (DEEENEESDNEN) the composition is skewed to acidic residues. Ser-1105 is subject to Phosphoserine; by CK1. Residues Lys-1191 and Lys-1199 each participate in a glycyl lysine isopeptide (Lys-Gly) (interchain with G-Cter in SUMO2) cross-link. Ser-1208 carries the post-translational modification Phosphoserine. Residue Lys-1223 forms a Glycyl lysine isopeptide (Lys-Gly) (interchain with G-Cter in SUMO2) linkage. Residues 1233–1526 (KIKSENVEGT…LEESDDDDLF (294 aa)) are disordered. Lys-1235 is covalently cross-linked (Glycyl lysine isopeptide (Lys-Gly) (interchain with G-Cter in SUMO1); alternate). Lys-1235 is covalently cross-linked (Glycyl lysine isopeptide (Lys-Gly) (interchain with G-Cter in SUMO2); alternate). Thr-1242 bears the Phosphothreonine mark. Lys-1254 is covalently cross-linked (Glycyl lysine isopeptide (Lys-Gly) (interchain with G-Cter in SUMO2)). The segment covering 1255 to 1265 (QRIEKKQKKEP) has biased composition (basic and acidic residues). Glycyl lysine isopeptide (Lys-Gly) (interchain with G-Cter in SUMO2) cross-links involve residues Lys-1271, Lys-1278, and Lys-1281. A phosphoserine mark is found at Ser-1290, Ser-1292, Ser-1294, and Ser-1297. Residue Thr-1322 is modified to Phosphothreonine. The span at 1325 to 1344 (LDSDEDFSGSDGKDEDEDFF) shows a compositional bias: acidic residues. A phosphoserine mark is found at Ser-1327 and Ser-1332. Thr-1349 is modified (phosphothreonine). Glycyl lysine isopeptide (Lys-Gly) (interchain with G-Cter in SUMO2) cross-links involve residues Lys-1358, Lys-1362, and Lys-1368. Phosphoserine occurs at positions 1369 and 1372. Lys-1380 participates in a covalent cross-link: Glycyl lysine isopeptide (Lys-Gly) (interchain with G-Cter in SUMO2). Residues Ser-1382 and Ser-1386 each carry the phosphoserine modification. A compositionally biased stretch (low complexity) spans 1405–1426 (SKQTVAVKKTATKSQSSTSTAG). Lys-1417 is covalently cross-linked (Glycyl lysine isopeptide (Lys-Gly) (interchain with G-Cter in SUMO2); alternate). Lys-1417 carries the post-translational modification N6-acetyllysine; alternate. Positions 1428 to 1434 (KKRAVPK) are interaction with PLSCR1. A Glycyl lysine isopeptide (Lys-Gly) (interchain with G-Cter in SUMO2); alternate cross-link involves residue Lys-1437. The residue at position 1437 (Lys-1437) is an N6-acetyllysine; alternate. Residues Lys-1449 and Lys-1454 each participate in a glycyl lysine isopeptide (Lys-Gly) (interchain with G-Cter in SUMO2) cross-link. Residues Ser-1464, Ser-1466, Ser-1469, and Ser-1471 each carry the phosphoserine modification. Residues Lys-1479 and Lys-1487 each participate in a glycyl lysine isopeptide (Lys-Gly) (interchain with G-Cter in SUMO2) cross-link. A compositionally biased stretch (basic and acidic residues) spans 1486 to 1497 (SKGENQDFRVDL). Ser-1520 is subject to Phosphoserine.

Belongs to the type II topoisomerase family. As to quaternary structure, homodimer. Interacts with COPS5. Interacts with RECQL5; this stimulates DNA decatenation. Interacts with SETMAR; stimulates the topoisomerase activity. Interacts with DHX9; this interaction occurs in a E2 enzyme UBE2I- and RNA-dependent manner, negatively regulates DHX9-mediated double-stranded DNA and RNA duplex helicase activity and stimulates TOP2A-mediated supercoiled DNA relaxation activity. Interacts with HNRNPU (via C-terminus); this interaction protects the topoisomerase TOP2A from degradation and positively regulates the relaxation of supercoiled DNA in a RNA-dependent manner. Interacts with MCM3AP. Interacts with ERCC6. Interacts with PLSCR1. Interacts with GCNA; this interaction allows the resolution of topoisomerase II (TOP2A) DNA-protein cross-links. Interacts with POL1RA/RPA1 (via dock II) and UBTF in the context of Pol I complex; may assist Pol I transcription initiation by releasing supercoils occurring during DNA unwinding. Interacts with TPRN; TPRN interacts with a number of DNA damage response proteins, is recruited to sites of DNA damage and may play a role in DNA damage repair. Mg(2+) is required as a cofactor. It depends on Mn(2+) as a cofactor. Ca(2+) serves as cofactor. Phosphorylation has no effect on catalytic activity. However, phosphorylation at Ser-1105 by CSNK1D/CK1 promotes DNA cleavable complex formation.

It is found in the cytoplasm. It localises to the nucleus. The protein localises to the nucleoplasm. Its subcellular location is the nucleolus. The catalysed reaction is ATP-dependent breakage, passage and rejoining of double-stranded DNA.. Key decatenating enzyme that alters DNA topology by binding to two double-stranded DNA molecules, generating a double-stranded break in one of the strands, passing the intact strand through the broken strand, and religating the broken strand. May play a role in regulating the period length of BMAL1 transcriptional oscillation. This Cricetulus griseus (Chinese hamster) protein is DNA topoisomerase 2-alpha (TOP2A).